The following is a 394-amino-acid chain: Phosphopentomutase (394 aa).

Mn(2+) contacts are provided by D14, D287, H292, D328, H329, and H340.

The protein belongs to the phosphopentomutase family. Requires Mn(2+) as cofactor.

The protein localises to the cytoplasm. It catalyses the reaction 2-deoxy-alpha-D-ribose 1-phosphate = 2-deoxy-D-ribose 5-phosphate. It carries out the reaction alpha-D-ribose 1-phosphate = D-ribose 5-phosphate. It functions in the pathway carbohydrate degradation; 2-deoxy-D-ribose 1-phosphate degradation; D-glyceraldehyde 3-phosphate and acetaldehyde from 2-deoxy-alpha-D-ribose 1-phosphate: step 1/2. Its function is as follows. Isomerase that catalyzes the conversion of deoxy-ribose 1-phosphate (dRib-1-P) and ribose 1-phosphate (Rib-1-P) to deoxy-ribose 5-phosphate (dRib-5-P) and ribose 5-phosphate (Rib-5-P), respectively. This Listeria monocytogenes serotype 4a (strain HCC23) protein is Phosphopentomutase.